A 417-amino-acid chain; its full sequence is Envelope glycoprotein D (417 aa).

Positions 1–18 (MQGPTLAVLGALLAVAVS) are cleaved as a signal peptide. Topologically, residues 19–360 (LPTPAPRVTV…APATPAAPDA (342 aa)) are virion surface. 2 N-linked (GlcNAc...) asparagine; by host glycosylation sites follow: Asn-41 and Asn-102. Cystine bridges form between Cys-75–Cys-197, Cys-114–Cys-213, and Cys-126–Cys-135. Residues 259–356 (EESKGYEPPP…HPPPAPATPA (98 aa)) are disordered. Positions 279–292 (GDDEAREDEGETED) are enriched in acidic residues. The helical transmembrane segment at 361–389 (VPVSVGIGIAAAAIACVAAAAAGAYFVYT) threads the bilayer. At 390–417 (RRRGAGPLPRKPKKLPAFGNVNYSALPG) the chain is on the intravirion side.

The protein belongs to the herpesviridae glycoprotein D family.

Its subcellular location is the virion membrane. In terms of biological role, envelope glycoprotein that binds to host cell entry receptors, promoting the virus entry into host cells. May trigger fusion with host membrane, by recruiting the fusion machinery composed of gB and gH/gL. The chain is Envelope glycoprotein D (gD) from Bovine herpesvirus 1.1 (strain Cooper) (BoHV-1).